The primary structure comprises 193 residues: Xanthine phosphoribosyltransferase (193 aa).

Leu-20 and Asn-27 together coordinate xanthine. 128 to 132 provides a ligand contact to 5-phospho-alpha-D-ribose 1-diphosphate; that stretch reads ASGGT. Lys-156 contributes to the xanthine binding site.

It belongs to the purine/pyrimidine phosphoribosyltransferase family. Xpt subfamily. In terms of assembly, homodimer.

Its subcellular location is the cytoplasm. It catalyses the reaction XMP + diphosphate = xanthine + 5-phospho-alpha-D-ribose 1-diphosphate. Its pathway is purine metabolism; XMP biosynthesis via salvage pathway; XMP from xanthine: step 1/1. Functionally, converts the preformed base xanthine, a product of nucleic acid breakdown, to xanthosine 5'-monophosphate (XMP), so it can be reused for RNA or DNA synthesis. This Deinococcus deserti (strain DSM 17065 / CIP 109153 / LMG 22923 / VCD115) protein is Xanthine phosphoribosyltransferase.